Here is a 165-residue protein sequence, read N- to C-terminus: uncharacterized protein (165 aa).

This sequence belongs to the IIV-6 196R family.

This is an uncharacterized protein from Invertebrate iridescent virus 3 (IIV-3).